A 257-amino-acid polypeptide reads, in one-letter code: Imidazole glycerol phosphate synthase subunit HisF (257 aa).

Catalysis depends on residues D12 and D131.

This sequence belongs to the HisA/HisF family. As to quaternary structure, heterodimer of HisH and HisF.

It localises to the cytoplasm. It catalyses the reaction 5-[(5-phospho-1-deoxy-D-ribulos-1-ylimino)methylamino]-1-(5-phospho-beta-D-ribosyl)imidazole-4-carboxamide + L-glutamine = D-erythro-1-(imidazol-4-yl)glycerol 3-phosphate + 5-amino-1-(5-phospho-beta-D-ribosyl)imidazole-4-carboxamide + L-glutamate + H(+). It functions in the pathway amino-acid biosynthesis; L-histidine biosynthesis; L-histidine from 5-phospho-alpha-D-ribose 1-diphosphate: step 5/9. In terms of biological role, IGPS catalyzes the conversion of PRFAR and glutamine to IGP, AICAR and glutamate. The HisF subunit catalyzes the cyclization activity that produces IGP and AICAR from PRFAR using the ammonia provided by the HisH subunit. The chain is Imidazole glycerol phosphate synthase subunit HisF from Burkholderia multivorans (strain ATCC 17616 / 249).